The chain runs to 443 residues: UDP-N-acetylmuramate--L-alanine ligase (443 aa).

ATP is bound at residue 110-116 (GAHGKTS).

This sequence belongs to the MurCDEF family.

It localises to the cytoplasm. The catalysed reaction is UDP-N-acetyl-alpha-D-muramate + L-alanine + ATP = UDP-N-acetyl-alpha-D-muramoyl-L-alanine + ADP + phosphate + H(+). The protein operates within cell wall biogenesis; peptidoglycan biosynthesis. Cell wall formation. This chain is UDP-N-acetylmuramate--L-alanine ligase, found in Streptococcus suis (strain 98HAH33).